Here is a 111-residue protein sequence, read N- to C-terminus: Nucleoid-associated protein VF_1686 (111 aa).

Disordered regions lie at residues 1–23 and 89–111; these read MFGG…DRMQ and TQKE…KMPF.

Belongs to the YbaB/EbfC family. Homodimer.

The protein localises to the cytoplasm. Its subcellular location is the nucleoid. Binds to DNA and alters its conformation. May be involved in regulation of gene expression, nucleoid organization and DNA protection. This Aliivibrio fischeri (strain ATCC 700601 / ES114) (Vibrio fischeri) protein is Nucleoid-associated protein VF_1686.